Here is a 149-residue protein sequence, read N- to C-terminus: Transcriptional repressor NrdR (149 aa).

A zinc finger spans residues 3-34 (CPFCFAVDTKVIDSRLVGGGSSVRRRRQCLVC). The region spanning 49–139 (PRVVKSNDVR…VYRSFEDIKE (91 aa)) is the ATP-cone domain.

This sequence belongs to the NrdR family. It depends on Zn(2+) as a cofactor.

Negatively regulates transcription of bacterial ribonucleotide reductase nrd genes and operons by binding to NrdR-boxes. The polypeptide is Transcriptional repressor NrdR (Shigella boydii serotype 18 (strain CDC 3083-94 / BS512)).